A 990-amino-acid chain; its full sequence is Fibronectin-binding protein A (990 aa).

An N-terminal signal peptide occupies residues 1 to 35 (MKNNLRYGIRKHKLGAASVFLGTMIVVGMGQDKEA). The short motif at 7-18 (YGIRKHKLGAAS) is the YSIRK-G/S signaling motif element. 2 disordered regions span residues 33–61 (KEAATSEQKTTTVEENGNSATDNKVSETQ) and 96–193 (PKAV…TEVK). The segment covering 37–55 (TSEQKTTTVEENGNSATDN) has biased composition (polar residues). The segment at 37–511 (TSEQKTTTVE…SNKADGNGKN (475 aa)) is ligand-binding A region. 2 stretches are compositionally biased toward basic and acidic residues: residues 112 to 126 (TVKEEVVKEEEKPQV) and 179 to 193 (DVAEAKEASDVTEVK). The fibrinogen/elastin/tropoelastin-binding stretch occupies residues 194–511 (GTDVTSKVTV…SNKADGNGKN (318 aa)). Positions 512–834 (GQIIQNNDFE…EGQQTIEEDT (323 aa)) are fibronectin-binding. A B-1 repeat occupies 545-574 (ENQDNTPLDIDYHTAIDGEGGYADGYIETI). Residues 545 to 604 (ENQDNTPLDIDYHTAIDGEGGYADGYIETIEETDSSAIDIDYHTAVDSEAGHVGGYTESS) are 2 X approximate tandem repeats. A B-2 repeat occupies 575–604 (EETDSSAIDIDYHTAVDSEAGHVGGYTESS). Positions 702-969 (LGYEGGQNSG…EESTNKGMLF (268 aa)) are disordered. One copy of the D-1 repeat lies at 707–744 (GQNSGNQSFEEDTEEDKPKYEQGGNIVDIDFDSVPQIQ). Residues 707–850 (GQNSGNQSFE…TPEVPSEPET (144 aa)) are 4 X approximate tandem repeats. Positions 741-752 (PQIQGQNNGNQS) are enriched in polar residues. The D-2 repeat unit spans residues 745–782 (GQNNGNQSFEEDTEKDKPKYEQGGNIIDIDFDSVPQIH). The D-3 repeat unit spans residues 783-821 (GFNKHNEIIEEDTNKDKPNYQFGGHNSVDFEEDTLPKVS). Residues 786-800 (KHNEIIEEDTNKDKP) are compositionally biased toward basic and acidic residues. The stretch at 822–850 (GQNEGQQTIEEDTTPPTPPTPEVPSEPET) is one D-4; truncated repeat. Pro residues predominate over residues 836–910 (PPTPPTPEVP…PAEPGKPVPP (75 aa)). 5 WR repeats span residues 851-864 (PTPPTPEVPSEPET), 865-878 (PTPPTPEVPSEPET), 879-892 (PTPPTPEVPSEPET), 893-906 (PTPPTPEVPAEPGK), and 907-920 (PVPPAEEEPKKPSK). The segment at 851-920 (PTPPTPEVPS…AEEEPKKPSK (70 aa)) is 5 X tandem repeats, Pro-rich (WR). Positions 954–958 (LPETG) match the LPXTG sorting signal motif. A Pentaglycyl murein peptidoglycan amidated threonine modification is found at Thr957. A propeptide spans 958–990 (GGEESTNKGMLFGGLFSILGLALLRRNKKNHKA) (removed by sortase).

The protein localises to the secreted. It is found in the cell wall. Functionally, promotes bacterial attachment to multiple substrates, such as fibronectin (Fn), fibrinogen (Fg), elastin peptides and tropoelastin. This confers to S.aureus the ability to invade endothelial cells. Promotes adherence to and aggregation of activated platelets. This is Fibronectin-binding protein A (fnbA) from Staphylococcus aureus (strain bovine RF122 / ET3-1).